Here is a 101-residue protein sequence, read N- to C-terminus: Multivesicular body sorting factor 12 (101 aa).

The residue at position 1 (methionine 1) is an N-acetylmethionine. Residue serine 94 is modified to Phosphoserine.

Component of the ESCRT-I complex (endosomal sorting complex required for transport I) which consists of STP22, VPS28, SRN2 and MVB12 in a 1:1:1:1 stoichiometry. Interacts with STP22 and SRN2.

The protein localises to the cytoplasm. It localises to the endosome. The protein resides in the late endosome membrane. Its function is as follows. Component of the ESCRT-I complex, a regulator of vesicular trafficking process. Binds to ubiquitinated cargo proteins and is required for the sorting of endocytic ubiquitinated cargos into multivesicular bodies (MVBs). Appears to be involved in cargo sorting and release of the ESCRT-I complex from the MVBs. The polypeptide is Multivesicular body sorting factor 12 (MVB12) (Saccharomyces cerevisiae (strain ATCC 204508 / S288c) (Baker's yeast)).